A 131-amino-acid polypeptide reads, in one-letter code: Large ribosomal subunit protein bL19c (131 aa).

Belongs to the bacterial ribosomal protein bL19 family.

Its subcellular location is the plastid. It localises to the cyanelle. This protein is located at the 30S-50S ribosomal subunit interface and may play a role in the structure and function of the aminoacyl-tRNA binding site. The chain is Large ribosomal subunit protein bL19c (rpl19) from Cyanophora paradoxa.